A 180-amino-acid polypeptide reads, in one-letter code: Ribosome maturation factor RimM (180 aa).

The PRC barrel domain occupies 103–176 (GDIWWDRDLV…RIVVDPPPGL (74 aa)).

This sequence belongs to the RimM family. In terms of assembly, binds ribosomal protein uS19.

It is found in the cytoplasm. Its function is as follows. An accessory protein needed during the final step in the assembly of 30S ribosomal subunit, possibly for assembly of the head region. Essential for efficient processing of 16S rRNA. May be needed both before and after RbfA during the maturation of 16S rRNA. It has affinity for free ribosomal 30S subunits but not for 70S ribosomes. This is Ribosome maturation factor RimM from Frankia alni (strain DSM 45986 / CECT 9034 / ACN14a).